The primary structure comprises 396 residues: ATP synthase subunit beta, chloroplastic (396 aa).

ATP is bound at residue 74–81 (GGAGVGKT).

It belongs to the ATPase alpha/beta chains family. F-type ATPases have 2 components, CF(1) - the catalytic core - and CF(0) - the membrane proton channel. CF(1) has five subunits: alpha(3), beta(3), gamma(1), delta(1), epsilon(1). CF(0) has four main subunits: a(1), b(1), b'(1) and c(9-12).

The protein resides in the plastid. The protein localises to the chloroplast thylakoid membrane. It catalyses the reaction ATP + H2O + 4 H(+)(in) = ADP + phosphate + 5 H(+)(out). Functionally, produces ATP from ADP in the presence of a proton gradient across the membrane. The catalytic sites are hosted primarily by the beta subunits. The polypeptide is ATP synthase subunit beta, chloroplastic (Adiantum raddianum (Maidenhair fern)).